The following is a 116-amino-acid chain: Iron-sulfur cluster insertion protein ErpA (116 aa).

Cysteine 44, cysteine 108, and cysteine 110 together coordinate iron-sulfur cluster.

This sequence belongs to the HesB/IscA family. As to quaternary structure, homodimer. It depends on iron-sulfur cluster as a cofactor.

Required for insertion of 4Fe-4S clusters for at least IspG. The protein is Iron-sulfur cluster insertion protein ErpA of Pseudomonas putida (strain ATCC 47054 / DSM 6125 / CFBP 8728 / NCIMB 11950 / KT2440).